Consider the following 142-residue polypeptide: Large ribosomal subunit protein uL11 (142 aa).

It belongs to the universal ribosomal protein uL11 family. In terms of assembly, part of the ribosomal stalk of the 50S ribosomal subunit. Interacts with L10 and the large rRNA to form the base of the stalk. L10 forms an elongated spine to which L12 dimers bind in a sequential fashion forming a multimeric L10(L12)X complex. Post-translationally, one or more lysine residues are methylated.

Functionally, forms part of the ribosomal stalk which helps the ribosome interact with GTP-bound translation factors. The protein is Large ribosomal subunit protein uL11 of Parvibaculum lavamentivorans (strain DS-1 / DSM 13023 / NCIMB 13966).